The primary structure comprises 418 residues: Serine hydroxymethyltransferase (418 aa).

(6S)-5,6,7,8-tetrahydrofolate-binding positions include Leu121 and 125–127 (GHL). Lys230 is subject to N6-(pyridoxal phosphate)lysine. 356 to 358 (SPF) serves as a coordination point for (6S)-5,6,7,8-tetrahydrofolate.

The protein belongs to the SHMT family. As to quaternary structure, homodimer. Pyridoxal 5'-phosphate serves as cofactor.

It is found in the cytoplasm. It carries out the reaction (6R)-5,10-methylene-5,6,7,8-tetrahydrofolate + glycine + H2O = (6S)-5,6,7,8-tetrahydrofolate + L-serine. Its pathway is one-carbon metabolism; tetrahydrofolate interconversion. The protein operates within amino-acid biosynthesis; glycine biosynthesis; glycine from L-serine: step 1/1. Its function is as follows. Catalyzes the reversible interconversion of serine and glycine with tetrahydrofolate (THF) serving as the one-carbon carrier. This reaction serves as the major source of one-carbon groups required for the biosynthesis of purines, thymidylate, methionine, and other important biomolecules. Also exhibits THF-independent aldolase activity toward beta-hydroxyamino acids, producing glycine and aldehydes, via a retro-aldol mechanism. The sequence is that of Serine hydroxymethyltransferase from Alteromonas mediterranea (strain DSM 17117 / CIP 110805 / LMG 28347 / Deep ecotype).